A 388-amino-acid polypeptide reads, in one-letter code: 8-amino-7-oxononanoate synthase (388 aa).

Position 23 (arginine 23) interacts with substrate. Residue 110 to 111 (GF) coordinates pyridoxal 5'-phosphate. A substrate-binding site is contributed by histidine 135. Residues serine 181, histidine 209, and threonine 235 each coordinate pyridoxal 5'-phosphate. Position 238 is an N6-(pyridoxal phosphate)lysine (lysine 238). Threonine 352 contributes to the substrate binding site.

The protein belongs to the class-II pyridoxal-phosphate-dependent aminotransferase family. BioF subfamily. Homodimer. Pyridoxal 5'-phosphate is required as a cofactor.

It catalyses the reaction 6-carboxyhexanoyl-[ACP] + L-alanine + H(+) = (8S)-8-amino-7-oxononanoate + holo-[ACP] + CO2. The protein operates within cofactor biosynthesis; biotin biosynthesis. Catalyzes the decarboxylative condensation of pimeloyl-[acyl-carrier protein] and L-alanine to produce 8-amino-7-oxononanoate (AON), [acyl-carrier protein], and carbon dioxide. This chain is 8-amino-7-oxononanoate synthase, found in Sodalis glossinidius (strain morsitans).